The primary structure comprises 684 residues: Glycine--tRNA ligase beta subunit (684 aa).

It belongs to the class-II aminoacyl-tRNA synthetase family. In terms of assembly, tetramer of two alpha and two beta subunits.

Its subcellular location is the cytoplasm. It catalyses the reaction tRNA(Gly) + glycine + ATP = glycyl-tRNA(Gly) + AMP + diphosphate. The polypeptide is Glycine--tRNA ligase beta subunit (Ectopseudomonas mendocina (strain ymp) (Pseudomonas mendocina)).